Reading from the N-terminus, the 238-residue chain is Transmembrane protein 127 (238 aa).

At methionine 1 the chain carries N-acetylmethionine. Positions 1–11 (MYAPGGAGLPG) are enriched in gly residues. Residues 1–27 (MYAPGGAGLPGGRRRRSPGSSALPKQP) are disordered. Serine 17 is modified (phosphoserine). The next 3 membrane-spanning stretches (helical) occupy residues 96–116 (IAAF…LDVF), 130–150 (AFAH…SYWA), and 169–189 (VYVT…ASIL).

It belongs to the TMEM127 family.

The protein resides in the cell membrane. Its subcellular location is the cytoplasm. Controls cell proliferation acting as a negative regulator of TOR signaling pathway mediated by mTORC1. May act as a tumor suppressor. This chain is Transmembrane protein 127 (Tmem127), found in Mus musculus (Mouse).